A 248-amino-acid polypeptide reads, in one-letter code: Phosphate import ATP-binding protein PstB (248 aa).

The ABC transporter domain occupies 1-243; that stretch reads MAVNDVNVFY…PQHNLTQGYI (243 aa). 33 to 40 is a binding site for ATP; sequence GPSGCGKS.

This sequence belongs to the ABC transporter superfamily. Phosphate importer (TC 3.A.1.7) family. In terms of assembly, the complex is composed of two ATP-binding proteins (PstB), two transmembrane proteins (PstC and PstA) and a solute-binding protein (PstS).

It is found in the cell inner membrane. The enzyme catalyses phosphate(out) + ATP + H2O = ADP + 2 phosphate(in) + H(+). In terms of biological role, part of the ABC transporter complex PstSACB involved in phosphate import. Responsible for energy coupling to the transport system. This is Phosphate import ATP-binding protein PstB from Rhodospirillum rubrum (strain ATCC 11170 / ATH 1.1.1 / DSM 467 / LMG 4362 / NCIMB 8255 / S1).